Reading from the N-terminus, the 106-residue chain is MKKKKAIMLGAAGGKAILKRKNRKKCIQHITTFFQMLRDWRNGDYPRSQVKTLLLLTAAILYIVMPLDIIPDVILGLGFIDDAAVLGLIWTLIKKELSQYEKWRLQ.

Helical transmembrane passes span 53–70 and 74–93; these read LLLLTAAILYIVMPLDII and ILGLGFIDDAAVLGLIWTLI.

It is found in the cell membrane. This is an uncharacterized protein from Bacillus subtilis (strain 168).